Here is a 377-residue protein sequence, read N- to C-terminus: Nitric oxide reductase FlRd-NAD(+) reductase (377 aa).

This sequence belongs to the FAD-dependent oxidoreductase family. FAD serves as cofactor.

It localises to the cytoplasm. The catalysed reaction is 2 reduced [nitric oxide reductase rubredoxin domain] + NAD(+) + H(+) = 2 oxidized [nitric oxide reductase rubredoxin domain] + NADH. It participates in nitrogen metabolism; nitric oxide reduction. Functionally, one of at least two accessory proteins for anaerobic nitric oxide (NO) reductase. Reduces the rubredoxin moiety of NO reductase. This Salmonella paratyphi B (strain ATCC BAA-1250 / SPB7) protein is Nitric oxide reductase FlRd-NAD(+) reductase.